Here is a 397-residue protein sequence, read N- to C-terminus: Tryptophan synthase beta chain (397 aa).

Position 91 is an N6-(pyridoxal phosphate)lysine (Lys91).

Belongs to the TrpB family. Tetramer of two alpha and two beta chains. Pyridoxal 5'-phosphate serves as cofactor.

The enzyme catalyses (1S,2R)-1-C-(indol-3-yl)glycerol 3-phosphate + L-serine = D-glyceraldehyde 3-phosphate + L-tryptophan + H2O. It participates in amino-acid biosynthesis; L-tryptophan biosynthesis; L-tryptophan from chorismate: step 5/5. Functionally, the beta subunit is responsible for the synthesis of L-tryptophan from indole and L-serine. In Bacillus cereus (strain ATCC 14579 / DSM 31 / CCUG 7414 / JCM 2152 / NBRC 15305 / NCIMB 9373 / NCTC 2599 / NRRL B-3711), this protein is Tryptophan synthase beta chain.